The chain runs to 169 residues: Peptide methionine sulfoxide reductase MsrA 1 (169 aa).

The active site involves Cys-12.

It belongs to the MsrA Met sulfoxide reductase family.

The catalysed reaction is L-methionyl-[protein] + [thioredoxin]-disulfide + H2O = L-methionyl-(S)-S-oxide-[protein] + [thioredoxin]-dithiol. It carries out the reaction [thioredoxin]-disulfide + L-methionine + H2O = L-methionine (S)-S-oxide + [thioredoxin]-dithiol. Has an important function as a repair enzyme for proteins that have been inactivated by oxidation. Catalyzes the reversible oxidation-reduction of methionine sulfoxide in proteins to methionine. The protein is Peptide methionine sulfoxide reductase MsrA 1 (msrA1) of Staphylococcus aureus (strain Mu50 / ATCC 700699).